We begin with the raw amino-acid sequence, 372 residues long: NAD(P)H-quinone oxidoreductase subunit 1 (372 aa).

8 consecutive transmembrane segments (helical) span residues 27 to 47 (LIWL…GVLV), 97 to 117 (LLFT…WLIV), 128 to 148 (VGIG…GLLM), 166 to 186 (AAQS…VVMM), 204 to 224 (LLSW…ICAL), 266 to 286 (VLSS…PIPV), 308 to 328 (SVGI…AILL), and 347 to 367 (FLLP…LAFP).

This sequence belongs to the complex I subunit 1 family. In terms of assembly, NDH-1 is composed of at least 11 different subunits.

The protein localises to the cellular thylakoid membrane. The catalysed reaction is a plastoquinone + NADH + (n+1) H(+)(in) = a plastoquinol + NAD(+) + n H(+)(out). It catalyses the reaction a plastoquinone + NADPH + (n+1) H(+)(in) = a plastoquinol + NADP(+) + n H(+)(out). Functionally, NDH-1 shuttles electrons from an unknown electron donor, via FMN and iron-sulfur (Fe-S) centers, to quinones in the respiratory and/or the photosynthetic chain. The immediate electron acceptor for the enzyme in this species is believed to be plastoquinone. Couples the redox reaction to proton translocation, and thus conserves the redox energy in a proton gradient. The protein is NAD(P)H-quinone oxidoreductase subunit 1 of Prochlorococcus marinus (strain MIT 9313).